Reading from the N-terminus, the 997-residue chain is Chromosomal passenger complex protein bir1 (997 aa).

BIR repeat units follow at residues 25–99 and 120–194; these read RLDT…PWAY and REQT…VFFT. Residues cysteine 163, cysteine 166, histidine 183, and cysteine 190 each coordinate Zn(2+). 5 disordered regions span residues 217–329, 370–527, 682–701, 755–782, and 817–838; these read EDLT…FSKG, TVSD…ENDE, TRDV…NHEE, SPKL…EKEA, and RTSV…ETKV. The segment covering 240–252 has biased composition (polar residues); sequence TLNFSPSRKNNLN. Over residues 288–299 the composition is skewed to basic residues; the sequence is PRRKNKSPKKSK. The segment covering 311–320 has biased composition (acidic residues); sequence SDEDEDDDDL. A compositionally biased stretch (polar residues) spans 370–392; that stretch reads TVSDITGHQSVTDESDEQNNCMS. Positions 408–423 are enriched in low complexity; it reads SVVSKSKEISSSVSSV. The segment covering 426-451 has biased composition (basic and acidic residues); the sequence is EQNHTEKQVAIETPEQQKVEKEDEHL. Polar residues-rich tracts occupy residues 463–476 and 485–512; these read KQPI…SSPD and RVSS…FSNI. Polar residues predominate over residues 756 to 772; sequence PKLQSKNNQTVEAVNTE. Basic and acidic residues predominate over residues 773 to 782; sequence TSDKLQEKEA. Over residues 817–830 the composition is skewed to polar residues; it reads RTSVQNGTRSVSKN.

As to quaternary structure, component of the CPC complex at least composed of ark1, bir1 and pic1. Interacts with the mitotic checkpoint complex (MCC) subunit mad3. Post-translationally, phosphorylated by ark1.

Its subcellular location is the nucleus. The protein resides in the cytoplasm. It is found in the cytoskeleton. The protein localises to the spindle. It localises to the chromosome. Its subcellular location is the centromere. In terms of biological role, component of the chromosomal passenger complex (CPC), a complex that acts as a key regulator of chromosome segregation and cytokinesis. Has a role in chromosome segregation by recruiting condensin and ark1 kinase to appropriate sites as the cell progresses through mitosis. Ark1 activity depends upon bir1 function and phosphorylation. Ark1 with bir1 function is required for full-scale association with kinetochores and formation of a complex with mad3. This Schizosaccharomyces pombe (strain 972 / ATCC 24843) (Fission yeast) protein is Chromosomal passenger complex protein bir1 (bir1).